Reading from the N-terminus, the 119-residue chain is FAD-linked sulfhydryl oxidase (119 aa).

The 97-residue stretch at 1 to 97 (MLHWGPKFWR…ISWSEYKNIY (97 aa)) folds into the ERV/ALR sulfhydryl oxidase domain. Cysteines 44 and 47 form a disulfide.

Belongs to the asfivirus B119L family. In terms of assembly, interacts with A151R. FAD serves as cofactor.

Its subcellular location is the host cytoplasm. It is found in the virion. The enzyme catalyses 2 R'C(R)SH + O2 = R'C(R)S-S(R)CR' + H2O2. Functionally, FAD-dependent sulfhydryl oxidase that catalyzes the formation of disulfide bonds in viral proteins produced in the cell cytoplasm. This chain is FAD-linked sulfhydryl oxidase, found in Ornithodoros (relapsing fever ticks).